The primary structure comprises 641 residues: Acetyl-coenzyme A synthetase (641 aa).

Residues 186-189 and T304 each bind CoA; that span reads RGGK. ATP is bound by residues 380–382, 404–409, D493, and R508; these read GEP and DTWWQT. A CoA-binding site is contributed by S516. R519 lines the ATP pocket. Positions 530, 532, and 535 each coordinate Mg(2+). K602 carries the post-translational modification N6-acetyllysine.

This sequence belongs to the ATP-dependent AMP-binding enzyme family. The cofactor is Mg(2+). Acetylated. Deacetylation by the SIR2-homolog deacetylase activates the enzyme.

The enzyme catalyses acetate + ATP + CoA = acetyl-CoA + AMP + diphosphate. Catalyzes the conversion of acetate into acetyl-CoA (AcCoA), an essential intermediate at the junction of anabolic and catabolic pathways. AcsA undergoes a two-step reaction. In the first half reaction, AcsA combines acetate with ATP to form acetyl-adenylate (AcAMP) intermediate. In the second half reaction, it can then transfer the acetyl group from AcAMP to the sulfhydryl group of CoA, forming the product AcCoA. This is Acetyl-coenzyme A synthetase from Gamma-proteobacterium EBAC31A08.